A 485-amino-acid chain; its full sequence is Hemolysin (485 aa).

The signal sequence occupies residues 1 to 28 (MKNFKGRKFLTCVLVSLCTLNYSSISFA). The next 4 membrane-spanning stretches (beta stranded) occupy residues 196–209 (KAQI…NAKY), 216–225 (IDFNAVANGE), 294–303 (SKDVQAAFKA), and 311–323 (ETSG…FEES). A Conserved undecapeptide motif is present at residues 465-475 (ECTGLAWEWWR).

It belongs to the cholesterol-dependent cytolysin family. Homooligomeric pore complex of 35 to 50 subunits; when inserted in the host membrane.

It is found in the secreted. Its subcellular location is the host cell membrane. Its function is as follows. A cholesterol-dependent toxin with hemolytic activity against host red blood cells. Causes cytolysis by forming pores in cholesterol containing host membranes. binding to target membranes, the protein undergoes a major conformation change, leading to its insertion in the host membrane and formation of an oligomeric pore complex. Cholesterol is required for binding to host membranes, membrane insertion and pore formation; cholesterol binding is mediated by a Thr-Leu pair in the C-terminus. Can be reversibly inactivated by oxidation. This is Hemolysin from Bacillus cereus.